Here is a 176-residue protein sequence, read N- to C-terminus: WASH complex subunit 3 (176 aa).

The stretch at 47–74 (ETKFVEMERQLQKTEAALIILEAKLASI) forms a coiled coil. Disordered stretches follow at residues 84-123 (ATEA…PESV) and 152-176 (KMQS…GQRE). Residues 104 to 115 (TTEPPTTENPTE) are compositionally biased toward low complexity.

Belongs to the CCDC53 family. In terms of assembly, component of the WASH complex.

Its subcellular location is the early endosome. Acts at least in part as component of the WASH complex which may regulate wash nucleation-promoting factor (NPF) activity and is required for its membrane targeting during endosomal sorting. During embryogenesis, not involved in the wash-dependent developmental migration of hemocytes anteriorly from the tail. The sequence is that of WASH complex subunit 3 from Drosophila melanogaster (Fruit fly).